The following is an 886-amino-acid chain: Neurotrophin 1 (886 aa).

A signal peptide spans 1-29 (MKAGRAFGCLFWALLYCVLYLDLVSGNSA). A propeptide spanning residues 30-498 (DDELMDFDFA…FDDFSLSKKR (469 aa)) is cleaved from the precursor. N-linked (GlcNAc...) asparagine glycosylation is found at asparagine 267 and asparagine 317. Positions 321–340 (FQQPSSQEEEKMASSNGGQS) are disordered. The N-linked (GlcNAc...) asparagine glycan is linked to asparagine 353. The interval 369–436 (RNSAEETEEP…HKPVVTPPNK (68 aa)) is disordered. The 90-residue stretch at 508 to 597 (MCQSVVRYAR…KVPTCCSCQV (90 aa)) folds into the Spaetzle domain. 3 disulfides stabilise this stretch: cysteine 509-cysteine 564, cysteine 546-cysteine 593, and cysteine 553-cysteine 595. Asparagine 623 carries an N-linked (GlcNAc...) asparagine glycan. Disordered regions lie at residues 675 to 754 (PGIS…QYHR) and 789 to 886 (VSAP…QSIQ). A compositionally biased stretch (low complexity) spans 698 to 710 (YKSSSSSSKKYYS). Residues 797-807 (PAPPLPMPPMP) show a composition bias toward pro residues. Basic residues-rich tracts occupy residues 815–827 (HQAHHQQPHHHLH) and 874–886 (SRRHYHNRRQSIQ).

Homodimer; disulfide-linked. Detected in the fan-shaped body which is a component of the locomotion center in the central nervous system (CNS) (at protein level). Expressed in the optic lobes and brain.

Functionally, neurotrophin which may function as a ligand for the Toll-related receptors Toll-7 and Tollo. Binds to Toll-7 and probably acts as its ligand in promoting motor axon targeting and neuronal survival in the central nervous system (CNS). Involved in synaptic targeting of ISNb/d motorneurons and also some SNa motorneurons. In larvae, involved in the negative regulation of the tracheal immune response to bacterial infection perhaps by acting as a ligand for the Toll-related receptor Tollo. May be involved in the normal development of specific neurons at the neuromuscular junction. The polypeptide is Neurotrophin 1 (Drosophila melanogaster (Fruit fly)).